The primary structure comprises 248 residues: Clathrin light chain A (248 aa).

The segment at M1–S93 is disordered. The segment covering A13 to G25 has biased composition (gly residues). Residues V100–R162 are involved in binding clathrin heavy chain. Phosphoserine is present on residues S105 and S206. Residue K223 is modified to N6-acetyllysine. S236 is subject to Phosphoserine. K242 carries the post-translational modification N6-acetyllysine.

The protein belongs to the clathrin light chain family. In terms of assembly, clathrin coats are formed from molecules containing 3 heavy chains and 3 light chains. Interacts with CALY; the interaction stimulates clathrin self-assembly and clathrin-mediated endocytosis. Interacts with CKAP5 and TACC3 forming the TACC3/ch-TOG/clathrin complex located at spindle inter-microtubules bridges; the complex implicates clathrin triskelions.

The protein localises to the cytoplasmic vesicle membrane. It is found in the membrane. It localises to the coated pit. Its subcellular location is the cytoplasm. The protein resides in the cytoskeleton. The protein localises to the spindle. Its function is as follows. Clathrin is the major protein of the polyhedral coat of coated pits and vesicles. Acts as a component of the TACC3/ch-TOG/clathrin complex proposed to contribute to stabilization of kinetochore fibers of the mitotic spindle by acting as inter-microtubule bridge. The chain is Clathrin light chain A (Clta) from Rattus norvegicus (Rat).